A 295-amino-acid polypeptide reads, in one-letter code: Ribosomal RNA small subunit methyltransferase A (295 aa).

Residues N31, L33, G58, E79, D104, and N129 each contribute to the S-adenosyl-L-methionine site.

It belongs to the class I-like SAM-binding methyltransferase superfamily. rRNA adenine N(6)-methyltransferase family. RsmA subfamily.

The protein resides in the cytoplasm. It carries out the reaction adenosine(1518)/adenosine(1519) in 16S rRNA + 4 S-adenosyl-L-methionine = N(6)-dimethyladenosine(1518)/N(6)-dimethyladenosine(1519) in 16S rRNA + 4 S-adenosyl-L-homocysteine + 4 H(+). Specifically dimethylates two adjacent adenosines (A1518 and A1519) in the loop of a conserved hairpin near the 3'-end of 16S rRNA in the 30S particle. May play a critical role in biogenesis of 30S subunits. The sequence is that of Ribosomal RNA small subunit methyltransferase A from Enterococcus faecalis (strain ATCC 700802 / V583).